Consider the following 414-residue polypeptide: Serine hydroxymethyltransferase (414 aa).

(6S)-5,6,7,8-tetrahydrofolate-binding positions include L121 and 125-127 (GHL). K229 is modified (N6-(pyridoxal phosphate)lysine).

The protein belongs to the SHMT family. As to quaternary structure, homodimer. The cofactor is pyridoxal 5'-phosphate.

The protein resides in the cytoplasm. It carries out the reaction (6R)-5,10-methylene-5,6,7,8-tetrahydrofolate + glycine + H2O = (6S)-5,6,7,8-tetrahydrofolate + L-serine. The protein operates within one-carbon metabolism; tetrahydrofolate interconversion. It functions in the pathway amino-acid biosynthesis; glycine biosynthesis; glycine from L-serine: step 1/1. Its function is as follows. Catalyzes the reversible interconversion of serine and glycine with tetrahydrofolate (THF) serving as the one-carbon carrier. This reaction serves as the major source of one-carbon groups required for the biosynthesis of purines, thymidylate, methionine, and other important biomolecules. Also exhibits THF-independent aldolase activity toward beta-hydroxyamino acids, producing glycine and aldehydes, via a retro-aldol mechanism. This Acidovorax ebreus (strain TPSY) (Diaphorobacter sp. (strain TPSY)) protein is Serine hydroxymethyltransferase.